The following is a 186-amino-acid chain: Elongation factor P (186 aa).

This sequence belongs to the elongation factor P family.

It is found in the cytoplasm. It functions in the pathway protein biosynthesis; polypeptide chain elongation. Involved in peptide bond synthesis. Stimulates efficient translation and peptide-bond synthesis on native or reconstituted 70S ribosomes in vitro. Probably functions indirectly by altering the affinity of the ribosome for aminoacyl-tRNA, thus increasing their reactivity as acceptors for peptidyl transferase. This Polynucleobacter asymbioticus (strain DSM 18221 / CIP 109841 / QLW-P1DMWA-1) (Polynucleobacter necessarius subsp. asymbioticus) protein is Elongation factor P.